The primary structure comprises 106 residues: uncharacterized protein (106 aa).

Belongs to the HesB/IscA family.

This is an uncharacterized protein from Rhodobacter capsulatus (Rhodopseudomonas capsulata).